A 370-amino-acid chain; its full sequence is 4-hydroxy-3-methylbut-2-en-1-yl diphosphate synthase (flavodoxin) (370 aa).

[4Fe-4S] cluster-binding residues include C268, C271, C303, and E310.

The protein belongs to the IspG family. The cofactor is [4Fe-4S] cluster.

It carries out the reaction (2E)-4-hydroxy-3-methylbut-2-enyl diphosphate + oxidized [flavodoxin] + H2O + 2 H(+) = 2-C-methyl-D-erythritol 2,4-cyclic diphosphate + reduced [flavodoxin]. Its pathway is isoprenoid biosynthesis; isopentenyl diphosphate biosynthesis via DXP pathway; isopentenyl diphosphate from 1-deoxy-D-xylulose 5-phosphate: step 5/6. Functionally, converts 2C-methyl-D-erythritol 2,4-cyclodiphosphate (ME-2,4cPP) into 1-hydroxy-2-methyl-2-(E)-butenyl 4-diphosphate. The protein is 4-hydroxy-3-methylbut-2-en-1-yl diphosphate synthase (flavodoxin) of Bacillus cereus (strain G9842).